The following is a 386-amino-acid chain: MNVFWFIPTHGDSRYLGTSQGARAADYDYFQQIAVAADTLGYEGVLLPTGRSCEDAWVVASSLIAATKRLKFLVAIRPGISSPGLAARMAATFDRLSNGRLLINVVTGGDAAELEGDGVFVDHDTRYEITDEFLHIWRKLLTAAHTNDAIDFEGKHLSSKGGKALYPPVQNPHPPLWFGGSSPAAHEMAGEHIDTYLTWGEPPAAVAKKIADIRARAAAHGRQIKFGIRLHVIVRETEEEAWAAADKLISKLDDETISRAQASFSKMDSEGQRRMAALHGGKRGGRAELEVYPNLWAGVGLVRGGAGTALVGNPEQVAARMKEYAELGIDTFILSGYPHLEESYRFAELVFPLLPNRRNKVSNGPLSGPFGEIVGNNYLPKAASSS.

It belongs to the SsuD family.

It carries out the reaction an alkanesulfonate + FMNH2 + O2 = an aldehyde + FMN + sulfite + H2O + 2 H(+). In terms of biological role, catalyzes the desulfonation of aliphatic sulfonates. The protein is Alkanesulfonate monooxygenase of Paraburkholderia phytofirmans (strain DSM 17436 / LMG 22146 / PsJN) (Burkholderia phytofirmans).